The chain runs to 453 residues: Tol-Pal system protein TolB (453 aa).

A signal peptide spans 1-34; sequence MYLIIKKTHKLPHWLQKVSLSIMLIIFLWKPALL.

The protein belongs to the TolB family. In terms of assembly, the Tol-Pal system is composed of five core proteins: the inner membrane proteins TolA, TolQ and TolR, the periplasmic protein TolB and the outer membrane protein Pal. They form a network linking the inner and outer membranes and the peptidoglycan layer.

The protein resides in the periplasm. In terms of biological role, part of the Tol-Pal system, which plays a role in outer membrane invagination during cell division and is important for maintaining outer membrane integrity. TolB occupies a key intermediary position in the Tol-Pal system because it communicates directly with both membrane-embedded components, Pal in the outer membrane and TolA in the inner membrane. In Blochmanniella pennsylvanica (strain BPEN), this protein is Tol-Pal system protein TolB.